Consider the following 214-residue polypeptide: uncharacterized protein (214 aa).

An N-terminal signal peptide occupies residues 1–18; sequence MTMYIGLILVVLATFCQG. A glycan (N-linked (GlcNAc...) asparagine; by host) is linked at Asn-64.

This is an uncharacterized protein from Magallana gigas (Pacific oyster).